A 125-amino-acid chain; its full sequence is Fluoride-specific ion channel FluC (125 aa).

4 helical membrane-spanning segments follow: residues 6-26 (VLVM…GLGI), 35-55 (FLFG…GLFA), 66-86 (LLLL…ALSI), and 100-120 (AMGY…AGYL). Positions 76 and 79 each coordinate Na(+).

This sequence belongs to the fluoride channel Fluc/FEX (TC 1.A.43) family.

It is found in the cell inner membrane. It catalyses the reaction fluoride(in) = fluoride(out). With respect to regulation, na(+) is not transported, but it plays an essential structural role and its presence is essential for fluoride channel function. Functionally, fluoride-specific ion channel. Important for reducing fluoride concentration in the cell, thus reducing its toxicity. The protein is Fluoride-specific ion channel FluC of Gloeobacter violaceus (strain ATCC 29082 / PCC 7421).